The following is a 338-amino-acid chain: uncharacterized protein (338 aa).

The N-terminal stretch at 1-29 is a signal peptide; it reads MIKQLYKNITICTLALSTTFTVLPATSYA.

The protein belongs to the aerolysin family.

This is an uncharacterized protein from Staphylococcus aureus (strain MSSA476).